The chain runs to 150 residues: D-aminoacyl-tRNA deacylase (150 aa).

The Gly-cisPro motif, important for rejection of L-amino acids motif lies at G137–P138.

The protein belongs to the DTD family. In terms of assembly, homodimer.

The protein resides in the cytoplasm. It carries out the reaction glycyl-tRNA(Ala) + H2O = tRNA(Ala) + glycine + H(+). The catalysed reaction is a D-aminoacyl-tRNA + H2O = a tRNA + a D-alpha-amino acid + H(+). An aminoacyl-tRNA editing enzyme that deacylates mischarged D-aminoacyl-tRNAs. Also deacylates mischarged glycyl-tRNA(Ala), protecting cells against glycine mischarging by AlaRS. Acts via tRNA-based rather than protein-based catalysis; rejects L-amino acids rather than detecting D-amino acids in the active site. By recycling D-aminoacyl-tRNA to D-amino acids and free tRNA molecules, this enzyme counteracts the toxicity associated with the formation of D-aminoacyl-tRNA entities in vivo and helps enforce protein L-homochirality. This is D-aminoacyl-tRNA deacylase from Listeria monocytogenes serotype 4b (strain CLIP80459).